Consider the following 276-residue polypeptide: Large ribosomal subunit protein uL2 (276 aa).

Disordered stretches follow at residues 14 to 58 (RNAS…GGGH) and 221 to 276 (TRGE…KNRK). Over residues 16–27 (ASVSDFSELTRS) the composition is skewed to polar residues. Basic residues predominate over residues 255 to 276 (RRPKKASNKMIVRRRPSGKNRK).

This sequence belongs to the universal ribosomal protein uL2 family. As to quaternary structure, part of the 50S ribosomal subunit. Forms a bridge to the 30S subunit in the 70S ribosome.

Its function is as follows. One of the primary rRNA binding proteins. Required for association of the 30S and 50S subunits to form the 70S ribosome, for tRNA binding and peptide bond formation. It has been suggested to have peptidyltransferase activity; this is somewhat controversial. Makes several contacts with the 16S rRNA in the 70S ribosome. This Bifidobacterium longum subsp. infantis (strain ATCC 15697 / DSM 20088 / JCM 1222 / NCTC 11817 / S12) protein is Large ribosomal subunit protein uL2.